Consider the following 998-residue polypeptide: Protein Smaug (998 aa).

Polar residues predominate over residues 1-37; it reads MKYATGTDNAMTSGISGQTNSSNSASNEMQPTTSTPT. 3 disordered regions span residues 1–45, 50–69, and 329–370; these read MKYA…EATS, TATYANGNPNPSANPSQSQP, and LCPA…GSSS. Over residues 329-338 the composition is skewed to low complexity; sequence LCPASGSRSS. Phosphoserine is present on residues S564 and S575. The interaction with cup stretch occupies residues 583-763; that stretch reads EFKPNYIKFH…KDLKFKLSKM (181 aa). Positions 600 to 654 constitute an SAM domain; it reads GIGLWLKSLRLHKYIELFKNMTYEEMLLITEDFLQSVGVTKGASHKLALCIDKLK. Disordered stretches follow at residues 773 to 892 and 943 to 977; these read HVKP…MQQM and NGSNDNLGLERNQQPQQQQQRKLSGGVSSAEQQPK. Polar residues-rich tracts occupy residues 801 to 822 and 854 to 864; these read KSGSNDRINNRKNSNDMLNFSL and HQPQYKSSSYP. The residue at position 971 (S971) is a Phosphoserine.

This sequence belongs to the SMAUG family. As to quaternary structure, interacts with oskar (osk). Binds to the 3'-UTR of nos. Interacts with cup, which in turn recruits eIF4-E, leading to an indirect interaction between smg and eIF4-E that prevents mRNA translation.

The protein localises to the cytoplasm. Functionally, translation regulator that binds to the 3'-UTR of specific mRNAs such as nanos (nos) and prevent their translation. Prevents translation of unlocalized nos in the bulk cytoplasm via the recruitment of cup. This Drosophila sechellia (Fruit fly) protein is Protein Smaug.